We begin with the raw amino-acid sequence, 412 residues long: Aspartate aminotransferase, cytoplasmic (412 aa).

Alanine 2 bears the N-acetylalanine mark. L-aspartate is bound by residues glycine 38, tryptophan 140, and asparagine 194. Lysine 258 bears the N6-(pyridoxal phosphate)lysine mark. Arginine 386 provides a ligand contact to L-aspartate.

Belongs to the class-I pyridoxal-phosphate-dependent aminotransferase family. As to quaternary structure, homodimer. The cofactor is pyridoxal 5'-phosphate.

Its subcellular location is the cytoplasm. The catalysed reaction is L-aspartate + 2-oxoglutarate = oxaloacetate + L-glutamate. It carries out the reaction L-cysteine + 2-oxoglutarate = 2-oxo-3-sulfanylpropanoate + L-glutamate. The enzyme catalyses (2S)-2-aminobutanoate + 2-oxoglutarate = 2-oxobutanoate + L-glutamate. It catalyses the reaction 3-sulfino-L-alanine + 2-oxoglutarate = 3-sulfinopyruvate + L-glutamate. Functionally, biosynthesis of L-glutamate from L-aspartate or L-cysteine. Important regulator of levels of glutamate, the major excitatory neurotransmitter of the vertebrate central nervous system. Acts as a scavenger of glutamate in brain neuroprotection. The aspartate aminotransferase activity is involved in hepatic glucose synthesis during development and in adipocyte glyceroneogenesis. Using L-cysteine as substrate, regulates levels of mercaptopyruvate, an important source of hydrogen sulfide. Mercaptopyruvate is converted into H(2)S via the action of 3-mercaptopyruvate sulfurtransferase (3MST). Hydrogen sulfide is an important synaptic modulator and neuroprotectant in the brain. The protein is Aspartate aminotransferase, cytoplasmic of Gallus gallus (Chicken).